Reading from the N-terminus, the 269-residue chain is Hdr-like menaquinol oxidoreductase iron-sulfur subunit 1 (269 aa).

The segment at residues 1-26 (MMSRRKFLLLTGAAAAGAILTPQISA) is a signal peptide (tat-type signal). C52, C55, C72, C76, C118, C121, C126, C130, C150, C153, C156, C160, C194, C197, C215, and C219 together coordinate [4Fe-4S] cluster. Residues 141-170 (GIVEIDMHRCIGCRYCMIACPYGARCFNFI) enclose the 4Fe-4S ferredoxin-type domain.

In terms of assembly, consists of five subunits: an integral membrane subunit, a cytochrome b-like subunit, a cytochrome c subunit and two iron-sulfur subunits. [4Fe-4S] cluster serves as cofactor. Predicted to be exported by the Tat system. The position of the signal peptide cleavage has been experimentally proven.

It localises to the cell membrane. In terms of biological role, has menaquinol-oxidizing activity. HmeA, HmeB and HmeE subunits may together catalyze electron transfer from menaquinol to cytochrome c. The sequence is that of Hdr-like menaquinol oxidoreductase iron-sulfur subunit 1 (hmeA) from Archaeoglobus fulgidus (strain ATCC 49558 / DSM 4304 / JCM 9628 / NBRC 100126 / VC-16).